The sequence spans 365 residues: Flagellar P-ring protein (365 aa).

Residues 1–19 (MMLSLCAIAGLLLAPSIQA) form the signal peptide.

Belongs to the FlgI family. In terms of assembly, the basal body constitutes a major portion of the flagellar organelle and consists of four rings (L,P,S, and M) mounted on a central rod.

The protein resides in the periplasm. Its subcellular location is the bacterial flagellum basal body. Its function is as follows. Assembles around the rod to form the L-ring and probably protects the motor/basal body from shearing forces during rotation. This chain is Flagellar P-ring protein, found in Sodalis glossinidius (strain morsitans).